Here is a 361-residue protein sequence, read N- to C-terminus: Mannose-1-phosphate guanyltransferase (361 aa).

The protein belongs to the transferase hexapeptide repeat family.

The protein resides in the cytoplasm. The enzyme catalyses alpha-D-mannose 1-phosphate + GTP + H(+) = GDP-alpha-D-mannose + diphosphate. Its pathway is nucleotide-sugar biosynthesis; GDP-alpha-D-mannose biosynthesis; GDP-alpha-D-mannose from alpha-D-mannose 1-phosphate (GTP route): step 1/1. Involved in cell wall synthesis where it is required for glycosylation. Involved in cell cycle progression through cell-size checkpoint. The protein is Mannose-1-phosphate guanyltransferase (MPG1) of Eremothecium gossypii (strain ATCC 10895 / CBS 109.51 / FGSC 9923 / NRRL Y-1056) (Yeast).